A 472-amino-acid chain; its full sequence is MKNTVWGPPEMRRIRRIHFVGIGGSGMCGIAEVLLNQGYEISGSDLKESATTRRLSDMGASITFGHTAQNIAGANVVVTSSAVAKDNPEVTAANEQRIPVIARAEMLAELMRYRHGVAIAGTHGKTTTTSLMASVLGEAGLDPTFVIGGRLNSAGTNAKLGASRYLVAEADESDASFLHLTPMVSVVTNIDADHMHTYGGDFEKLKQTFVDFLHNLPFYGVAVMCYDDPVVREIIPRVGRSVITYGFNEKADVRAVDIAQQGMQTSFTAKRPGGHPDLRISLNMPGKHNVLNALAVIAVATDEGIADEAIVSALNKFQGVGRRFQVYGNYPVDEGSVMLVDDYGHHPREVDATIKAIRDGWPEKRLVAVFQPHRYTRTRDLYEDFVQVLSKVDVLVLMDVYPAGEKEIPGADGRSLCRSIRQRGQLDPIFIERGQDVKAVLSGVLQDGDLLLTQGAGDIGAVAGVLAEGGLQ.

121-127 provides a ligand contact to ATP; sequence GTHGKTT.

It belongs to the MurCDEF family.

It localises to the cytoplasm. The catalysed reaction is UDP-N-acetyl-alpha-D-muramate + L-alanine + ATP = UDP-N-acetyl-alpha-D-muramoyl-L-alanine + ADP + phosphate + H(+). It participates in cell wall biogenesis; peptidoglycan biosynthesis. Cell wall formation. The sequence is that of UDP-N-acetylmuramate--L-alanine ligase from Hahella chejuensis (strain KCTC 2396).